A 129-amino-acid polypeptide reads, in one-letter code: Tumor necrosis factor receptor superfamily member 12A (129 aa).

The signal sequence occupies residues 1-27 (MASAWPRSLPQILVLGFGLVLMRAAAG). The Extracellular segment spans residues 28 to 80 (EQAPGTSPCSSGSSWSADLDKCMDCASCPARPHSDFCLGCAAAPPAHFRLLWP). 3 disulfide bridges follow: cysteine 36–cysteine 49, cysteine 52–cysteine 67, and cysteine 55–cysteine 64. The TNFR-Cys; atypical repeat unit spans residues 36–67 (CSSGSSWSADLDKCMDCASCPARPHSDFCLGC). The helical transmembrane segment at 81 to 101 (ILGGALSLVLVLALVSSFLVW) threads the bilayer. Over 102–129 (RRCRRREKFTTPIEETGGEGCPGVALIQ) the chain is Cytoplasmic.

In terms of assembly, associates with TRAF1 and TRAF2, and probably also with TRAF3. As to expression, highly expressed in fetal heart, intestine, kidney, liver, lung and skin, and in adult heart and ovary. Intermediate expression in adult kidney, lung and skin.

It localises to the membrane. Functionally, receptor for TNFSF12/TWEAK. Weak inducer of apoptosis in some cell types. Promotes angiogenesis and the proliferation of endothelial cells. May modulate cellular adhesion to matrix proteins. This chain is Tumor necrosis factor receptor superfamily member 12A (Tnfrsf12a), found in Mus musculus (Mouse).